The following is a 212-amino-acid chain: Ribosome maturation factor RimP (212 aa).

Belongs to the RimP family.

It localises to the cytoplasm. In terms of biological role, required for maturation of 30S ribosomal subunits. This chain is Ribosome maturation factor RimP, found in Variovorax paradoxus (strain S110).